Consider the following 314-residue polypeptide: Probable cell division protein WhiA (314 aa).

Residues 277-311 constitute a DNA-binding region (H-T-H motif); that stretch reads TLKELGEKMPSGAISKSGINHRLRKLNQLAEGYQQ.

It belongs to the WhiA family.

In terms of biological role, involved in cell division and chromosome segregation. This is Probable cell division protein WhiA from Latilactobacillus sakei subsp. sakei (strain 23K) (Lactobacillus sakei subsp. sakei).